Reading from the N-terminus, the 701-residue chain is ER-retained PMA1-suppressing protein 1 (701 aa).

The N-terminal stretch at 1–27 (MKMNLKRLVVTFFSCITFLLKFTIAAA) is a signal peptide. Residues 28–142 (EPPEGFPEPL…LIAFARRESM (115 aa)) form the Thioredoxin 1 domain. A disulfide bridge links cysteine 60 with cysteine 63. N-linked (GlcNAc...) asparagine glycosylation is present at asparagine 85. Cysteine 200 and cysteine 203 form a disulfide bridge. N-linked (GlcNAc...) asparagine glycans are attached at residues asparagine 264, asparagine 299, and asparagine 370. Residues 408–446 (PTFFMFKDGDPISYVFPGYSTTEMRNIDAIMDWVKKYSN) form the Thioredoxin 2 domain. Residues 646–666 (IIHGNGMPGYLIVIVLFIAIL) form a helical membrane-spanning segment.

Belongs to the protein disulfide isomerase family. Interacts with mutated PMA1-D378N but not wild type PMA1. Interacts with EUG1, KAR2, MPD1 and PDI1.

The protein localises to the endoplasmic reticulum membrane. It carries out the reaction Catalyzes the rearrangement of -S-S- bonds in proteins.. Its function is as follows. Acts as a membrane-bound chaperone in endoplasmic reticulum quality control. Probably facilitates presentation of substrate to membrane-bound components of the degradation machinery. In Saccharomyces cerevisiae (strain ATCC 204508 / S288c) (Baker's yeast), this protein is ER-retained PMA1-suppressing protein 1 (EPS1).